Reading from the N-terminus, the 636-residue chain is 1-deoxy-D-xylulose-5-phosphate synthase (636 aa).

Thiamine diphosphate-binding positions include histidine 77 and glycine 118–serine 120. A Mg(2+)-binding site is contributed by aspartate 149. Thiamine diphosphate-binding positions include glycine 150–alanine 151, asparagine 178, tyrosine 290, and glutamate 375. Asparagine 178 serves as a coordination point for Mg(2+).

It belongs to the transketolase family. DXPS subfamily. Homodimer. The cofactor is Mg(2+). Thiamine diphosphate serves as cofactor.

The catalysed reaction is D-glyceraldehyde 3-phosphate + pyruvate + H(+) = 1-deoxy-D-xylulose 5-phosphate + CO2. The protein operates within metabolic intermediate biosynthesis; 1-deoxy-D-xylulose 5-phosphate biosynthesis; 1-deoxy-D-xylulose 5-phosphate from D-glyceraldehyde 3-phosphate and pyruvate: step 1/1. Functionally, catalyzes the acyloin condensation reaction between C atoms 2 and 3 of pyruvate and glyceraldehyde 3-phosphate to yield 1-deoxy-D-xylulose-5-phosphate (DXP). This Cytophaga hutchinsonii (strain ATCC 33406 / DSM 1761 / CIP 103989 / NBRC 15051 / NCIMB 9469 / D465) protein is 1-deoxy-D-xylulose-5-phosphate synthase.